Here is a 344-residue protein sequence, read N- to C-terminus: Serine proteinase inhibitor 2 (344 aa).

This sequence belongs to the serpin family. Poxviruses subfamily.

The protein localises to the host cytoplasm. Functionally, viral serpin that inhibits both cysteine and serine proteinases involved in the regulation of host inflammatory and apoptosis processes. Major anti-apoptotic protein which inhibits both intrinsic and extrinsic pathways and strongly cleaves host CASP1 and CASP8 but is a rather poor inhibitor of host CASP3. Prevents the proteolytic activity of host interleukin-1-beta converting enzyme (ICE) and ICE-like enzymes. Can also block apoptosis through host tumor necrosis factor (TNF) receptor. The inhibition of host ICE is an example of a 'cross-class' interaction, in which a serpin inhibits a non-serine proteinase. Also inhibits granzyme B. The sequence is that of Serine proteinase inhibitor 2 (OPG199) from Homo sapiens (Human).